Reading from the N-terminus, the 139-residue chain is Large-conductance mechanosensitive channel (139 aa).

3 consecutive transmembrane segments (helical) span residues 10–30, 40–60, and 80–100; these read FAVK…AAFG, VIMP…YYIA, and LAYG…FIIF.

It belongs to the MscL family. Homopentamer.

Its subcellular location is the cell inner membrane. Functionally, channel that opens in response to stretch forces in the membrane lipid bilayer. May participate in the regulation of osmotic pressure changes within the cell. The polypeptide is Large-conductance mechanosensitive channel (Janthinobacterium sp. (strain Marseille) (Minibacterium massiliensis)).